Reading from the N-terminus, the 313-residue chain is Porphobilinogen deaminase (313 aa).

Position 242 is an S-(dipyrrolylmethanemethyl)cysteine (Cys242).

This sequence belongs to the HMBS family. Monomer. It depends on dipyrromethane as a cofactor.

The catalysed reaction is 4 porphobilinogen + H2O = hydroxymethylbilane + 4 NH4(+). It participates in porphyrin-containing compound metabolism; protoporphyrin-IX biosynthesis; coproporphyrinogen-III from 5-aminolevulinate: step 2/4. Its function is as follows. Tetrapolymerization of the monopyrrole PBG into the hydroxymethylbilane pre-uroporphyrinogen in several discrete steps. This is Porphobilinogen deaminase from Pseudomonas putida (strain W619).